The following is a 71-amino-acid chain: Small ribosomal subunit protein bS21 (71 aa).

The protein belongs to the bacterial ribosomal protein bS21 family.

The polypeptide is Small ribosomal subunit protein bS21 (Shewanella sp. (strain MR-4)).